An 809-amino-acid chain; its full sequence is Leucine--tRNA ligase (809 aa).

Residues P40–H50 carry the 'HIGH' region motif. The short motif at K579 to S583 is the 'KMSKS' region element. ATP is bound at residue K582.

The protein belongs to the class-I aminoacyl-tRNA synthetase family.

The protein resides in the cytoplasm. The catalysed reaction is tRNA(Leu) + L-leucine + ATP = L-leucyl-tRNA(Leu) + AMP + diphosphate. The sequence is that of Leucine--tRNA ligase from Campylobacter lari (strain RM2100 / D67 / ATCC BAA-1060).